Reading from the N-terminus, the 450-residue chain is Phosphoglucosamine mutase (450 aa).

S101 (phosphoserine intermediate) is an active-site residue. S101, D240, D242, and D244 together coordinate Mg(2+). Residue S101 is modified to Phosphoserine.

Belongs to the phosphohexose mutase family. It depends on Mg(2+) as a cofactor. Post-translationally, activated by phosphorylation. Phosphorylated by StkP in vivo.

It carries out the reaction alpha-D-glucosamine 1-phosphate = D-glucosamine 6-phosphate. Functionally, catalyzes the conversion of glucosamine-6-phosphate to glucosamine-1-phosphate. The chain is Phosphoglucosamine mutase from Streptococcus pneumoniae (strain ATCC BAA-255 / R6).